We begin with the raw amino-acid sequence, 171 residues long: S-ribosylhomocysteine lyase (171 aa).

His-54, His-58, and Cys-128 together coordinate Fe cation.

The protein belongs to the LuxS family. In terms of assembly, homodimer. Fe cation serves as cofactor.

It carries out the reaction S-(5-deoxy-D-ribos-5-yl)-L-homocysteine = (S)-4,5-dihydroxypentane-2,3-dione + L-homocysteine. Involved in the synthesis of autoinducer 2 (AI-2) which is secreted by bacteria and is used to communicate both the cell density and the metabolic potential of the environment. The regulation of gene expression in response to changes in cell density is called quorum sensing. Catalyzes the transformation of S-ribosylhomocysteine (RHC) to homocysteine (HC) and 4,5-dihydroxy-2,3-pentadione (DPD). This Edwardsiella ictaluri (strain 93-146) protein is S-ribosylhomocysteine lyase.